The following is a 153-amino-acid chain: Agglutinin (153 aa).

Residues 22–25 and N46 each bind beta-D-galactosyl-(1-&gt;3)-N-acetyl-D-galactosamine; that span reads NAWE. A Ricin B-type lectin domain is found at 58–153; sequence GDSAEYLIIN…DNQKWYFDAK (96 aa).

As to quaternary structure, homodimer.

Lectin that primarily recognizes glycans with a non-reducing terminal N-acetylgalactosamine (GalNAc), with a preference for the alpha- over the beta-anomer. Can also bind non-reducing terminal galactose (Gal) residues but with a lower affinity. Strongly interacts with glycolipid type glycans with terminal non-reducing Gal or GalNAc but fails to bind sialylated or fucosylated forms of the same glycans. Strongly interacts with galactosylated N-glycans, displaying highest affinity for alpha-1-3 branched mono-antennary N-glycans but also binding to multi-antennary glycans. This is Agglutinin from Sclerotinia sclerotiorum (strain ATCC 18683 / 1980 / Ss-1) (White mold).